Here is a 57-residue protein sequence, read N- to C-terminus: uncharacterized protein (57 aa).

The stretch at Asn9–Lys45 forms a coiled coil.

This is an uncharacterized protein from Archaeoglobus fulgidus (strain ATCC 49558 / DSM 4304 / JCM 9628 / NBRC 100126 / VC-16).